Consider the following 122-residue polypeptide: uncharacterized protein (122 aa).

The signal sequence occupies residues 1–33; it reads MASTVAGLSMSAESLRLPLLIGVSSGMLSVSDA.

This is an uncharacterized protein from Saccharomyces cerevisiae (strain ATCC 204508 / S288c) (Baker's yeast).